We begin with the raw amino-acid sequence, 296 residues long: Nitrogenase iron protein (296 aa).

11–18 (GKGGIGKS) is a binding site for ATP. Position 99 (Cys99) interacts with [4Fe-4S] cluster. Arg102 carries the ADP-ribosylarginine; by dinitrogenase reductase ADP-ribosyltransferase modification. Cys133 provides a ligand contact to [4Fe-4S] cluster.

The protein belongs to the NifH/BchL/ChlL family. In terms of assembly, homodimer. The cofactor is [4Fe-4S] cluster. In terms of processing, the reversible ADP-ribosylation of Arg-102 inactivates the nitrogenase reductase and regulates nitrogenase activity.

It carries out the reaction N2 + 8 reduced [2Fe-2S]-[ferredoxin] + 16 ATP + 16 H2O = H2 + 8 oxidized [2Fe-2S]-[ferredoxin] + 2 NH4(+) + 16 ADP + 16 phosphate + 6 H(+). Its function is as follows. The key enzymatic reactions in nitrogen fixation are catalyzed by the nitrogenase complex, which has 2 components: the iron protein and the molybdenum-iron protein. In Sinorhizobium fredii (strain NBRC 101917 / NGR234), this protein is Nitrogenase iron protein (nifH1).